The following is a 291-amino-acid chain: ATP synthase gamma chain (291 aa).

This sequence belongs to the ATPase gamma chain family. As to quaternary structure, F-type ATPases have 2 components, CF(1) - the catalytic core - and CF(0) - the membrane proton channel. CF(1) has five subunits: alpha(3), beta(3), gamma(1), delta(1), epsilon(1). CF(0) has three main subunits: a, b and c.

Its subcellular location is the cell inner membrane. Its function is as follows. Produces ATP from ADP in the presence of a proton gradient across the membrane. The gamma chain is believed to be important in regulating ATPase activity and the flow of protons through the CF(0) complex. This Neisseria meningitidis serogroup C / serotype 2a (strain ATCC 700532 / DSM 15464 / FAM18) protein is ATP synthase gamma chain.